The chain runs to 240 residues: UDP-2,3-diacylglucosamine hydrolase (240 aa).

Mn(2+) is bound by residues Asp9, His11, Asp43, Asn81, and His116. 81 to 82 provides a ligand contact to substrate; that stretch reads NR. Substrate-binding residues include Asp124, Ser162, Lys166, Lys169, and His197. 2 residues coordinate Mn(2+): His197 and His199.

It belongs to the LpxH family. Mn(2+) is required as a cofactor.

The protein resides in the cell inner membrane. It catalyses the reaction UDP-2-N,3-O-bis[(3R)-3-hydroxytetradecanoyl]-alpha-D-glucosamine + H2O = 2-N,3-O-bis[(3R)-3-hydroxytetradecanoyl]-alpha-D-glucosaminyl 1-phosphate + UMP + 2 H(+). It functions in the pathway glycolipid biosynthesis; lipid IV(A) biosynthesis; lipid IV(A) from (3R)-3-hydroxytetradecanoyl-[acyl-carrier-protein] and UDP-N-acetyl-alpha-D-glucosamine: step 4/6. Its function is as follows. Hydrolyzes the pyrophosphate bond of UDP-2,3-diacylglucosamine to yield 2,3-diacylglucosamine 1-phosphate (lipid X) and UMP by catalyzing the attack of water at the alpha-P atom. Involved in the biosynthesis of lipid A, a phosphorylated glycolipid that anchors the lipopolysaccharide to the outer membrane of the cell. This chain is UDP-2,3-diacylglucosamine hydrolase, found in Neisseria meningitidis serogroup A / serotype 4A (strain DSM 15465 / Z2491).